Here is a 106-residue protein sequence, read N- to C-terminus: UPF0060 membrane protein Smed_0659 (106 aa).

Transmembrane regions (helical) follow at residues F4 to W24, G31 to V51, and A61 to A81.

The protein belongs to the UPF0060 family.

The protein localises to the cell inner membrane. The protein is UPF0060 membrane protein Smed_0659 of Sinorhizobium medicae (strain WSM419) (Ensifer medicae).